The primary structure comprises 107 residues: Serine-rich and transmembrane domain-containing protein 1 (107 aa).

The chain crosses the membrane as a helical span at residues 43-63 (IYVSIFLSLLAFLLLLLIIAL).

The protein localises to the membrane. This Homo sapiens (Human) protein is Serine-rich and transmembrane domain-containing protein 1 (SERTM1).